The following is a 271-amino-acid chain: 5-deoxy-glucuronate isomerase (271 aa).

It belongs to the isomerase IolB family.

It carries out the reaction 5-deoxy-D-glucuronate = 5-dehydro-2-deoxy-D-gluconate. The protein operates within polyol metabolism; myo-inositol degradation into acetyl-CoA; acetyl-CoA from myo-inositol: step 4/7. Involved in the isomerization of 5-deoxy-glucuronate (5DG) to 5-dehydro-2-deoxy-D-gluconate (DKG or 2-deoxy-5-keto-D-gluconate). The sequence is that of 5-deoxy-glucuronate isomerase from Bacillus licheniformis (strain ATCC 14580 / DSM 13 / JCM 2505 / CCUG 7422 / NBRC 12200 / NCIMB 9375 / NCTC 10341 / NRRL NRS-1264 / Gibson 46).